Consider the following 191-residue polypeptide: Ferric nitrobindin-like protein (191 aa).

The short motif at 20-26 (GDWAGAG) is the GXWXGXG element.

It belongs to the nitrobindin family.

The chain is Ferric nitrobindin-like protein from Streptomyces coelicolor (strain ATCC BAA-471 / A3(2) / M145).